The following is a 272-amino-acid chain: MDFAGHLHLRAAPRAFGHTALTLQSFRAPFHLSKPYWDYDSRVLLVQVVNPTAGILAGDRIESEITVDAGAALLITTPSASRVFRMDAGVATCRQHFTVAAGAWLEVMPGPLVPHRGSDYRQSTIVELTRGAGGFFVDQLMPGRAAHGEAWAWRRLCLEFECRLDGRLLVRERVDQSGEELRALAELAGSGAAACFANAILIPGAEADEDWRAAVEGLHRDGAWVGVSALREAGWSIKVIAPDGAYLRETLRAIRAVLAEAFPRMRCDPRRL.

The protein belongs to the UreD family. In terms of assembly, ureD, UreF and UreG form a complex that acts as a GTP-hydrolysis-dependent molecular chaperone, activating the urease apoprotein by helping to assemble the nickel containing metallocenter of UreC. The UreE protein probably delivers the nickel.

It is found in the cytoplasm. Its function is as follows. Required for maturation of urease via the functional incorporation of the urease nickel metallocenter. In Opitutus terrae (strain DSM 11246 / JCM 15787 / PB90-1), this protein is Urease accessory protein UreD.